Reading from the N-terminus, the 231-residue chain is Biosynthetic peptidoglycan transglycosylase (231 aa).

The chain crosses the membrane as a helical span at residues 12–34 (AAVLAGLALLLVALAVSYRWVPP).

The protein belongs to the glycosyltransferase 51 family.

The protein resides in the cell inner membrane. The enzyme catalyses [GlcNAc-(1-&gt;4)-Mur2Ac(oyl-L-Ala-gamma-D-Glu-L-Lys-D-Ala-D-Ala)](n)-di-trans,octa-cis-undecaprenyl diphosphate + beta-D-GlcNAc-(1-&gt;4)-Mur2Ac(oyl-L-Ala-gamma-D-Glu-L-Lys-D-Ala-D-Ala)-di-trans,octa-cis-undecaprenyl diphosphate = [GlcNAc-(1-&gt;4)-Mur2Ac(oyl-L-Ala-gamma-D-Glu-L-Lys-D-Ala-D-Ala)](n+1)-di-trans,octa-cis-undecaprenyl diphosphate + di-trans,octa-cis-undecaprenyl diphosphate + H(+). It participates in cell wall biogenesis; peptidoglycan biosynthesis. In terms of biological role, peptidoglycan polymerase that catalyzes glycan chain elongation from lipid-linked precursors. The sequence is that of Biosynthetic peptidoglycan transglycosylase from Rhodospirillum centenum (strain ATCC 51521 / SW).